The sequence spans 374 residues: Glutamate 5-kinase (374 aa).

Lys-9 is an ATP binding site. Residues Ser-49, Asp-136, and Asn-148 each contribute to the substrate site. ATP-binding positions include 168-169 (TD) and 210-216 (TGGMRSK). The PUA domain maps to 276-354 (SGTITVDSGA…EEARQYSYLH (79 aa)).

This sequence belongs to the glutamate 5-kinase family.

The protein resides in the cytoplasm. It catalyses the reaction L-glutamate + ATP = L-glutamyl 5-phosphate + ADP. It participates in amino-acid biosynthesis; L-proline biosynthesis; L-glutamate 5-semialdehyde from L-glutamate: step 1/2. Its function is as follows. Catalyzes the transfer of a phosphate group to glutamate to form L-glutamate 5-phosphate. The polypeptide is Glutamate 5-kinase (Geobacillus thermodenitrificans (strain NG80-2)).